A 262-amino-acid polypeptide reads, in one-letter code: 3-deoxy-manno-octulosonate cytidylyltransferase (262 aa).

This sequence belongs to the KdsB family.

The protein resides in the cytoplasm. It catalyses the reaction 3-deoxy-alpha-D-manno-oct-2-ulosonate + CTP = CMP-3-deoxy-beta-D-manno-octulosonate + diphosphate. It participates in nucleotide-sugar biosynthesis; CMP-3-deoxy-D-manno-octulosonate biosynthesis; CMP-3-deoxy-D-manno-octulosonate from 3-deoxy-D-manno-octulosonate and CTP: step 1/1. It functions in the pathway bacterial outer membrane biogenesis; lipopolysaccharide biosynthesis. Functionally, activates KDO (a required 8-carbon sugar) for incorporation into bacterial lipopolysaccharide in Gram-negative bacteria. The polypeptide is 3-deoxy-manno-octulosonate cytidylyltransferase (Acidovorax ebreus (strain TPSY) (Diaphorobacter sp. (strain TPSY))).